The chain runs to 322 residues: UDP-N-acetylenolpyruvoylglucosamine reductase (322 aa).

The FAD-binding PCMH-type domain occupies 36-202; that stretch reads RAGGPAQVLF…TSVLFEGVPG (167 aa). Arginine 182 is a catalytic residue. Serine 231 (proton donor) is an active-site residue. Glutamate 301 is a catalytic residue.

Belongs to the MurB family. FAD serves as cofactor.

The protein localises to the cytoplasm. It carries out the reaction UDP-N-acetyl-alpha-D-muramate + NADP(+) = UDP-N-acetyl-3-O-(1-carboxyvinyl)-alpha-D-glucosamine + NADPH + H(+). It participates in cell wall biogenesis; peptidoglycan biosynthesis. Functionally, cell wall formation. In Brucella suis biovar 1 (strain 1330), this protein is UDP-N-acetylenolpyruvoylglucosamine reductase.